The following is an 874-amino-acid chain: Alanine--tRNA ligase (874 aa).

Zn(2+) contacts are provided by His562, His566, Cys664, and His668.

This sequence belongs to the class-II aminoacyl-tRNA synthetase family. It depends on Zn(2+) as a cofactor.

Its subcellular location is the cytoplasm. It carries out the reaction tRNA(Ala) + L-alanine + ATP = L-alanyl-tRNA(Ala) + AMP + diphosphate. In terms of biological role, catalyzes the attachment of alanine to tRNA(Ala) in a two-step reaction: alanine is first activated by ATP to form Ala-AMP and then transferred to the acceptor end of tRNA(Ala). Also edits incorrectly charged Ser-tRNA(Ala) and Gly-tRNA(Ala) via its editing domain. This chain is Alanine--tRNA ligase, found in Shewanella denitrificans (strain OS217 / ATCC BAA-1090 / DSM 15013).